We begin with the raw amino-acid sequence, 448 residues long: Asparagine--tRNA ligase (448 aa).

It belongs to the class-II aminoacyl-tRNA synthetase family. As to quaternary structure, homodimer.

The protein localises to the cytoplasm. It carries out the reaction tRNA(Asn) + L-asparagine + ATP = L-asparaginyl-tRNA(Asn) + AMP + diphosphate + H(+). In Streptococcus thermophilus (strain ATCC BAA-491 / LMD-9), this protein is Asparagine--tRNA ligase.